The chain runs to 489 residues: UDP-N-acetylmuramate--L-alanine ligase (489 aa).

130-136 serves as a coordination point for ATP; that stretch reads GTHGKTS.

Belongs to the MurCDEF family.

It localises to the cytoplasm. It catalyses the reaction UDP-N-acetyl-alpha-D-muramate + L-alanine + ATP = UDP-N-acetyl-alpha-D-muramoyl-L-alanine + ADP + phosphate + H(+). The protein operates within cell wall biogenesis; peptidoglycan biosynthesis. Cell wall formation. The chain is UDP-N-acetylmuramate--L-alanine ligase from Corynebacterium efficiens (strain DSM 44549 / YS-314 / AJ 12310 / JCM 11189 / NBRC 100395).